A 553-amino-acid chain; its full sequence is Heterochromatin protein 1-binding protein 3 (553 aa).

Ala-2 carries the post-translational modification N-acetylalanine. At Ser-6 the chain carries Phosphoserine. Positions 30–131 (LGEKADDSTM…SKEKEKKVKK (102 aa)) are disordered. Thr-51 carries the post-translational modification Phosphothreonine. A compositionally biased stretch (acidic residues) spans 60–71 (GEEEKPEPDGSS). Lys-64 participates in a covalent cross-link: Glycyl lysine isopeptide (Lys-Gly) (interchain with G-Cter in SUMO2). Residue Thr-85 is modified to Phosphothreonine. The segment covering 91–127 (REAEQPKGEPESGEKEESKSAEETKKEEKDQSKEKEK) has biased composition (basic and acidic residues). Residue Lys-97 forms a Glycyl lysine isopeptide (Lys-Gly) (interchain with G-Cter in SUMO2) linkage. 3 positions are modified to phosphoserine: Ser-142, Ser-155, and Ser-156. The H15 1 domain maps to 157–232 (PRPKMDAILT…GASGSFVVVQ (76 aa)). Residue Lys-190 is modified to N6-acetyllysine. The tract at residues 231-251 (VQKSKTPQKSKNRKKGSAVDP) is disordered. Positions 236-246 (TPQKSKNRKKG) are enriched in basic residues. Position 247 is a phosphoserine (Ser-247). The PxVxL motif motif lies at 253–257 (PQVKL). 2 consecutive H15 domains span residues 253-328 (PQVK…QLKK) and 335-411 (LGGS…QLCF). A Glycyl lysine isopeptide (Lys-Gly) (interchain with G-Cter in SUMO2) cross-link involves residue Lys-256. A disordered region spans residues 422-553 (PKKVSDGSED…MKKKSFKTKK (132 aa)). A compositionally biased stretch (acidic residues) spans 428–449 (GSEDEDEEEDEEESSEDSEDEE). Phosphoserine is present on residues Ser-441, Ser-442, and Ser-445. Composition is skewed to basic residues over residues 488-509 (GKVR…RKGR) and 542-553 (SAMKKKSFKTKK).

Interacts (via PxVxL motif) with CBX5.

It is found in the nucleus. The protein localises to the chromosome. Component of heterochromatin that maintains heterochromatin integrity during G1/S progression and regulates the duration of G1 phase to critically influence cell proliferative capacity. May play a role in hypoxia-induced oncogenesis. The chain is Heterochromatin protein 1-binding protein 3 (Hp1bp3) from Rattus norvegicus (Rat).